Here is a 303-residue protein sequence, read N- to C-terminus: Cytochrome c oxidase subunit 2 (303 aa).

A signal peptide spans 1-25; that stretch reads MRHSTTLTGCATGAAGLLAATAAAA. The next 2 helical transmembrane spans lie at 60–80 and 104–124; these read FILV…LYAV and WTIV…PVLF. The Cu cation site is built by His217, Cys252, Cys256, and His260.

This sequence belongs to the cytochrome c oxidase subunit 2 family. The cofactor is Cu cation.

The protein resides in the cell membrane. The catalysed reaction is 4 Fe(II)-[cytochrome c] + O2 + 8 H(+)(in) = 4 Fe(III)-[cytochrome c] + 2 H2O + 4 H(+)(out). Subunits I and II form the functional core of the enzyme complex. Electrons originating in cytochrome c are transferred via heme a and Cu(A) to the binuclear center formed by heme a3 and Cu(B). The protein is Cytochrome c oxidase subunit 2 (ctaC) of Cereibacter sphaeroides (Rhodobacter sphaeroides).